The primary structure comprises 313 residues: Olfactory receptor 1M1 (313 aa).

Residues 1 to 25 (MEPQNHTSASEFILLGLSEKPDHDP) are Extracellular-facing. N-linked (GlcNAc...) asparagine glycosylation is present at asparagine 5. The chain crosses the membrane as a helical span at residues 26–46 (VLFSLFLCMYMITVVGNLLII). Residues 47–54 (LAISFDSH) lie on the Cytoplasmic side of the membrane. Residues 55–75 (LHTPMYFFLANLSLVDFCLAT) form a helical membrane-spanning segment. The Extracellular segment spans residues 76-97 (NTVPKMLVNIQTRNKSISYPCC). The N-linked (GlcNAc...) asparagine glycan is linked to asparagine 89. Cysteines 97 and 179 form a disulfide. The chain crosses the membrane as a helical span at residues 98–118 (LTQMYFFHFFGIMDSVLIAVM). Residues 119–142 (AYDRFVAICHPLHYSTIMSPRLCG) lie on the Cytoplasmic side of the membrane. A helical membrane pass occupies residues 143–163 (LLVGVPWVYSCFISLTHILLM). Topologically, residues 164–196 (ARLVFCGKNELPHYFCDLTPLLRLSCTDTTVNK) are extracellular. A helical membrane pass occupies residues 197-217 (IFVLIVAGMVIATPFVCILAS). Over 218–244 (YARIIVAIMKVPSAGGRKKAFSTCSSH) the chain is Cytoplasmic. Residues 245–265 (LSVVALFYGTTIGVYLCPSSV) form a helical membrane-spanning segment. The Extracellular portion of the chain corresponds to 266-274 (RTAVKEKAS). A helical membrane pass occupies residues 275–292 (AVMYTAVTPMLNPFIYSL). Topologically, residues 293–313 (RNRDLKGALKKIINRKISTSS) are cytoplasmic.

It belongs to the G-protein coupled receptor 1 family. In terms of tissue distribution, expressed in testis.

The protein localises to the cell membrane. In terms of biological role, odorant receptor. The protein is Olfactory receptor 1M1 of Mus musculus (Mouse).